The sequence spans 582 residues: Leucine-rich repeat transmembrane neuronal protein 3 (582 aa).

The signal sequence occupies residues 1–30 (MGFNVIRLLRGSAVAVVLAPTVLLTMLSSA). One can recognise an LRRNT domain in the interval 31 to 61 (ERGCPKGCRCEGKMVYCESQKLQEIPSSISA). Residues 31-420 (ERGCPKGCRC…VDTEHISFHK (390 aa)) are Extracellular-facing. LRR repeat units follow at residues 63-83 (CLGL…QFKG), 86-107 (QLTW…AFNG), 110-131 (RLKE…TFRP), 134-155 (NLRN…QFRG), 158-179 (KLLS…IFQD), 182-203 (NLEL…VFAG), 206-226 (RLKE…ALFP), 230-251 (SLQN…MSWT), 254-275 (SLQR…SVFQ), and 279-300 (NLQR…ILDS). N-linked (GlcNAc...) asparagine glycosylation is present at asparagine 126. Residues 312-363 (NIWECSRNICSLVNWLRSFKGLRENTIICASPKELQGVNVIDAVKNYSICGK) form the LRRCT domain. Asparagine 357 carries an N-linked (GlcNAc...) asparagine glycan. Positions 378 to 410 (KPTFKPKLPRPKHESKPPLPPTVGATEPSPETD) are disordered. The chain crosses the membrane as a helical span at residues 421–441 (IIAGSVALFLSVLVILLVMYV). The Cytoplasmic portion of the chain corresponds to 442 to 582 (SWKRYPASMK…RISDHKPQLA (141 aa)).

It belongs to the LRRTM family. In terms of tissue distribution, expressed in neuronal tissues.

The protein resides in the cell membrane. It is found in the postsynaptic cell membrane. Its function is as follows. May play a role in the development and maintenance of the vertebrate nervous system. Exhibits a limited synaptogenic activity in vitro, restricted to excitatory presynaptic differentiation. This chain is Leucine-rich repeat transmembrane neuronal protein 3 (Lrrtm3), found in Mus musculus (Mouse).